Consider the following 482-residue polypeptide: MYGAGVVTRMNEAERFHMTDPGSTKILIYAFNYADRMLEEVPYLRYSAERSLCFLGDLRDPGTRLVVITSEAVDPATLDYHLRDVFRFDEPALADVRRRLTLLTPASRAARPLDSLVLEDEALVETLRRAVAERPAGTIVDFSASPATDELGRRTGATPEEGDHAFVARWGSKSGGKEICLRAGVAVPGGTSEVLRSEAEVVEAIHRLSCGTAAARRAMVKLDAITWAASIGNVLIDRDKLRHTGDLVGSAEVIRLPAEEFRRELAEQGAIVEEFLEEITDSPSGLGHIERDGTVRVVACHDQVLSGGQYWGCRFPADERWRPEITDAVRRTGEVLSGLGHRGAFGVDFVVAGERGLLAVEINLRKVGPSHVVRYAEALVGARVGADGMLRGADGRPVYYTHGRLLEPETLGKLNPRTAVERLRAEGLLYRHDTGEGVALHVLGALNACGFVELTALARSPEAADGYSRAAQALLTGPYPSA.

The enzyme catalyses L-propargylglycine + L-glutamate + ATP = L-gamma-glutamyl-L-propargylglycine + ADP + phosphate + H(+). The protein operates within amino-acid metabolism. It functions in the pathway antibiotic biosynthesis. In terms of biological role, involved in the biosynthesis of terminal alkyne-containing amino acids such as L-beta-ethynylserine, that are produced as antibiotics by S.cattleya. Catalyzes the ATP-dependent ligation of L-propargylglycine to L-glutamate to form the dipeptide L-gamma-glutamyl-L-propargylglycine. Is selective for L-propargylglycine over norvaline, allylglycine and the standard proteinogenic amino acids, except L-cysteine which can be used as a substrate to a lesser extent. This is L-propargylglycine--L-glutamate ligase from Streptantibioticus cattleyicolor (strain ATCC 35852 / DSM 46488 / JCM 4925 / NBRC 14057 / NRRL 8057) (Streptomyces cattleya).